A 429-amino-acid chain; its full sequence is TNFAIP3-interacting protein 2 (429 aa).

S7 carries the phosphoserine modification. Residues Q29–H117 adopt a coiled-coil conformation. Positions H177 to G195 are enriched in basic and acidic residues. Positions H177–V199 are disordered. Coiled coils occupy residues H196–K226 and E255–W340. The interval R289–P347 is ubiquitin-binding domain (UBD). Residues P372–Q400 are disordered. The span at A388–Q397 shows a compositional bias: low complexity. The CCHC NOA-type zinc-finger motif lies at Q397 to Q429. The Zn(2+) site is built by C405, C408, H423, and C427.

In terms of assembly, interacts with STK11/LKB1, TNFAIP3, IKBKG, NFKB1, MAP3K8, TEK, RIPK1, CHUK, IKBKB and SMARCD1. Interacts with polyubiquitin. As to quaternary structure, (Microbial infection) Interacts with severe fever with thrombocytopenia syndrome virus (SFTSV) NSs; this interaction promotes TPL2 complex formation and signaling activity leading to IL-10 production. In vitro phosphorylated by CHUK. In terms of processing, ubiquitinated; undergoes 'Lys-48'-linked polyubiquitination probably leading to constitutive proteasomal degradation which can be impaired by IKK-A/CHUK or IKBKB probably involving deubiquitination. Deubiquitinated by USP35; leading to stabilization and inhibition of TNFalpha-induced NF-kappa-B activation. As to expression, ubiquitously expressed in all tissues examined.

Its subcellular location is the cytoplasm. It is found in the nucleus. In terms of biological role, inhibits NF-kappa-B activation by blocking the interaction of RIPK1 with its downstream effector NEMO/IKBKG. Forms a ternary complex with NFKB1 and MAP3K8 but appears to function upstream of MAP3K8 in the TLR4 signaling pathway that regulates MAP3K8 activation. Involved in activation of the MEK/ERK signaling pathway during innate immune response; this function seems to be stimulus- and cell type specific. Required for stability of MAP3K8. Involved in regulation of apoptosis in endothelial cells; promotes TEK agonist-stimulated endothelial survival. May act as transcriptional coactivator when translocated to the nucleus. Enhances CHUK-mediated NF-kappa-B activation involving NF-kappa-B p50-p65 and p50-c-Rel complexes. The polypeptide is TNFAIP3-interacting protein 2 (Homo sapiens (Human)).